We begin with the raw amino-acid sequence, 206 residues long: MELNVKTLEGKDAGKVSLSDAIFGLEPREDILARVIRWQLAKKQQGTHKAKGRAEVSRTGAKMYKQKGTGRARHHSARAPQFRGGGKAHGPVVRSHEHDLPKKVRALGLRHALSAKIKADDVIVIDNLVATEAKTKALASAFETLGLTNALFIGGAELDGNFKLAAQNIPNIDVLPIQGINVYDIVRRGKLVLSKAAVEALEERFK.

Residues 63 to 97 (MYKQKGTGRARHHSARAPQFRGGGKAHGPVVRSHE) are disordered. Residues 64–77 (YKQKGTGRARHHSA) are compositionally biased toward basic residues.

This sequence belongs to the universal ribosomal protein uL4 family. In terms of assembly, part of the 50S ribosomal subunit.

Its function is as follows. One of the primary rRNA binding proteins, this protein initially binds near the 5'-end of the 23S rRNA. It is important during the early stages of 50S assembly. It makes multiple contacts with different domains of the 23S rRNA in the assembled 50S subunit and ribosome. Functionally, forms part of the polypeptide exit tunnel. This is Large ribosomal subunit protein uL4 from Rhizobium etli (strain CIAT 652).